The chain runs to 341 residues: tRNA N6-adenosine threonylcarbamoyltransferase (341 aa).

Histidine 111 and histidine 115 together coordinate Fe cation. Residues 134 to 138, aspartate 167, glycine 180, and asparagine 276 each bind substrate; that span reads LVSGG. Aspartate 304 lines the Fe cation pocket.

It belongs to the KAE1 / TsaD family. Fe(2+) serves as cofactor.

The protein localises to the cytoplasm. It catalyses the reaction L-threonylcarbamoyladenylate + adenosine(37) in tRNA = N(6)-L-threonylcarbamoyladenosine(37) in tRNA + AMP + H(+). Required for the formation of a threonylcarbamoyl group on adenosine at position 37 (t(6)A37) in tRNAs that read codons beginning with adenine. Is involved in the transfer of the threonylcarbamoyl moiety of threonylcarbamoyl-AMP (TC-AMP) to the N6 group of A37, together with TsaE and TsaB. TsaD likely plays a direct catalytic role in this reaction. The sequence is that of tRNA N6-adenosine threonylcarbamoyltransferase from Pseudomonas putida (strain W619).